The primary structure comprises 496 residues: Protein nucleotidyltransferase YdiU (496 aa).

ATP-binding residues include glycine 98, glycine 100, arginine 101, lysine 116, aspartate 128, glycine 129, arginine 179, and arginine 186. The active-site Proton acceptor is aspartate 259. 2 residues coordinate Mg(2+): asparagine 260 and aspartate 269. Aspartate 269 provides a ligand contact to ATP.

It belongs to the SELO family. Requires Mg(2+) as cofactor. Mn(2+) serves as cofactor.

It catalyses the reaction L-seryl-[protein] + ATP = 3-O-(5'-adenylyl)-L-seryl-[protein] + diphosphate. It carries out the reaction L-threonyl-[protein] + ATP = 3-O-(5'-adenylyl)-L-threonyl-[protein] + diphosphate. The catalysed reaction is L-tyrosyl-[protein] + ATP = O-(5'-adenylyl)-L-tyrosyl-[protein] + diphosphate. The enzyme catalyses L-histidyl-[protein] + UTP = N(tele)-(5'-uridylyl)-L-histidyl-[protein] + diphosphate. It catalyses the reaction L-seryl-[protein] + UTP = O-(5'-uridylyl)-L-seryl-[protein] + diphosphate. It carries out the reaction L-tyrosyl-[protein] + UTP = O-(5'-uridylyl)-L-tyrosyl-[protein] + diphosphate. Functionally, nucleotidyltransferase involved in the post-translational modification of proteins. It can catalyze the addition of adenosine monophosphate (AMP) or uridine monophosphate (UMP) to a protein, resulting in modifications known as AMPylation and UMPylation. This chain is Protein nucleotidyltransferase YdiU, found in Albidiferax ferrireducens (strain ATCC BAA-621 / DSM 15236 / T118) (Rhodoferax ferrireducens).